A 251-amino-acid polypeptide reads, in one-letter code: Ubiquinone/menaquinone biosynthesis C-methyltransferase UbiE (251 aa).

S-adenosyl-L-methionine contacts are provided by residues Thr-74, Asp-95, and 123 to 124 (NA).

This sequence belongs to the class I-like SAM-binding methyltransferase superfamily. MenG/UbiE family.

The catalysed reaction is a 2-demethylmenaquinol + S-adenosyl-L-methionine = a menaquinol + S-adenosyl-L-homocysteine + H(+). The enzyme catalyses a 2-methoxy-6-(all-trans-polyprenyl)benzene-1,4-diol + S-adenosyl-L-methionine = a 5-methoxy-2-methyl-3-(all-trans-polyprenyl)benzene-1,4-diol + S-adenosyl-L-homocysteine + H(+). The protein operates within quinol/quinone metabolism; menaquinone biosynthesis; menaquinol from 1,4-dihydroxy-2-naphthoate: step 2/2. It participates in cofactor biosynthesis; ubiquinone biosynthesis. Its function is as follows. Methyltransferase required for the conversion of demethylmenaquinol (DMKH2) to menaquinol (MKH2) and the conversion of 2-polyprenyl-6-methoxy-1,4-benzoquinol (DDMQH2) to 2-polyprenyl-3-methyl-6-methoxy-1,4-benzoquinol (DMQH2). The protein is Ubiquinone/menaquinone biosynthesis C-methyltransferase UbiE of Shewanella sediminis (strain HAW-EB3).